We begin with the raw amino-acid sequence, 221 residues long: Endonuclease V (221 aa).

2 residues coordinate Mg(2+): aspartate 44 and aspartate 112.

It belongs to the endonuclease V family. The cofactor is Mg(2+).

It localises to the cytoplasm. It catalyses the reaction Endonucleolytic cleavage at apurinic or apyrimidinic sites to products with a 5'-phosphate.. DNA repair enzyme involved in the repair of deaminated bases. Selectively cleaves double-stranded DNA at the second phosphodiester bond 3' to a deoxyinosine leaving behind the intact lesion on the nicked DNA. The protein is Endonuclease V of Nostoc sp. (strain PCC 7120 / SAG 25.82 / UTEX 2576).